An 858-amino-acid polypeptide reads, in one-letter code: Receptor-like protein kinase ANXUR2 (858 aa).

The first 27 residues, 1-27 (MNEKLRILFSFLCFFYVLLVSPSQSNG), serve as a signal peptide directing secretion. Residues 28–431 (QDISLSCGAS…VKKDFQGDKR (404 aa)) are Extracellular-facing. N-linked (GlcNAc...) asparagine glycans are attached at residues Asn-133, Asn-293, Asn-303, and Asn-331. The chain crosses the membrane as a helical span at residues 432–452 (ITAFVIGSAGGVAAVLFCALC). Topologically, residues 453 to 858 (FTMYQRKRKF…FSQIVNPKGR (406 aa)) are cytoplasmic. The region spanning 521 to 794 (FDESNVIGVG…GDVLWNLEFA (274 aa)) is the Protein kinase domain. ATP-binding positions include 527 to 535 (IGVGGFGKV) and Lys-549. Residue Asp-645 is the Proton acceptor of the active site. The disordered stretch occupies residues 800–858 (TADGSRHRTPSNGGGSVDLGGGGGGVTVNISAGESDLGDDLSSEENSGIFSQIVNPKGR). A compositionally biased stretch (gly residues) spans 811-825 (NGGGSVDLGGGGGGV). Over residues 843 to 858 (EENSGIFSQIVNPKGR) the composition is skewed to polar residues.

Belongs to the protein kinase superfamily. Ser/Thr protein kinase family. Expressed in pollen, but not in pistils or seedlings.

The protein resides in the cell membrane. It carries out the reaction L-seryl-[protein] + ATP = O-phospho-L-seryl-[protein] + ADP + H(+). It catalyses the reaction L-threonyl-[protein] + ATP = O-phospho-L-threonyl-[protein] + ADP + H(+). Functionally, receptor-like protein kinase that controls pollen tube behavior by directing rupture at proper timing to release the sperm cell. This is Receptor-like protein kinase ANXUR2 (ANX2) from Arabidopsis thaliana (Mouse-ear cress).